Consider the following 465-residue polypeptide: Asparagine--tRNA ligase (465 aa).

This sequence belongs to the class-II aminoacyl-tRNA synthetase family. Homodimer.

The protein localises to the cytoplasm. The catalysed reaction is tRNA(Asn) + L-asparagine + ATP = L-asparaginyl-tRNA(Asn) + AMP + diphosphate + H(+). The polypeptide is Asparagine--tRNA ligase (Pseudoalteromonas atlantica (strain T6c / ATCC BAA-1087)).